Here is a 509-residue protein sequence, read N- to C-terminus: MEFSWLETRWARPFYLAFVFCLALGLLQAIKLYLRRQRLLRDLRPFPAPPTHWFLGHQKFIQDDNMEKLEEIIEKYPRAFPFWIGPFQAFFCIYDPDYAKTLLSRTDPKSQYLQKFSPPLLGKGLAALDGPKWFQHRRLLTPGFHFNILKAYIEVMAHSVKMMLDKWEKICSTQDTSVEVYEHINSMSLDIIMKCAFSKETNCQTNSTHDPYAKAIFELSKIIFHRLYSLLYHSDIIFKLSPQGYRFQKLSRVLNQYTDTIIQERKKSLQAGVKQDNTPKRKYQDFLDIVLSAKDESGSSFSDIDVHSEVSTFLLAGHDTLAASISWILYCLALNPEHQERCREEVRGILGDGSSITWDQLGEMSYTTMCIKETCRLIPAVPSISRDLSKPLTFPDGCTLPAGITVVLSIWGLHHNPAVWKNPKVFDPLRFSQENSDQRHPYAYLPFSAGSRNCIGQEFAMIELKVTIALILLHFRVTPDPTRPLTFPNHFILKPKNGMYLHLKKLSEC.

The helical transmembrane segment at 14–34 threads the bilayer; that stretch reads FYLAFVFCLALGLLQAIKLYL. C454 is a binding site for heme.

It belongs to the cytochrome P450 family. Heme is required as a cofactor. As to expression, expressed in brain, heart, kidney and skin and, at lower levels, in skeletal muscle and liver. In the brain, high levels are detected in amygdala and lower levels in globus pallidus and cerebellum. In the heart, very high levels in aorta, but very low levels in other heart regions. Also expressed in breast, prostate and colon.

It is found in the endoplasmic reticulum membrane. The protein resides in the microsome membrane. The catalysed reaction is N-(5Z,8Z,11Z,14Z-eicosatetraenoyl)-ethanolamine + reduced [NADPH--hemoprotein reductase] + O2 = N-(14,15-epoxy-5Z,8Z,11Z-eicosatrienoyl)-ethanolamine + oxidized [NADPH--hemoprotein reductase] + H2O + H(+). Functionally, a cytochrome P450 monooxygenase that selectively catalyzes the epoxidation of the last double bond of the arachidonoyl moiety of anandamide, potentially modulating endocannabinoid signaling. Has no hydroxylase activity toward various fatty acids, steroids and prostaglandins. Mechanistically, uses molecular oxygen inserting one oxygen atom into a substrate, and reducing the second into a water molecule, with two electrons provided by NADPH via cytochrome P450 reductase (CPR; NADPH-ferrihemoprotein reductase). This Homo sapiens (Human) protein is Cytochrome P450 4X1.